A 422-amino-acid chain; its full sequence is 5-hydroxytryptamine receptor 1A (422 aa).

Residues 1–23 form a disordered region; it reads MDVLSPGQGNNTTSPPAPFETGG. Topologically, residues 1–38 are extracellular; that stretch reads MDVLSPGQGNNTTSPPAPFETGGNTTGISDVTVSYQVI. Residues asparagine 10, asparagine 11, and asparagine 24 are each glycosylated (N-linked (GlcNAc...) asparagine). Residues 39–59 traverse the membrane as a helical segment; that stretch reads TSLLLGTLIFCAVLGNACVVA. Over 60 to 73 the chain is Cytoplasmic; it reads AIALERSLQNVANY. Residues 74-98 traverse the membrane as a helical segment; the sequence is LIGSLAVTDLMVSVLVLPMAALYQV. Topologically, residues 99–107 are extracellular; the sequence is LNKWTLGQV. Residues 108 to 132 traverse the membrane as a helical segment; sequence TCDLFIALDVLCCTSSILHLCAIAL. A disulfide bridge links cysteine 109 with cysteine 187. Residues aspartate 116 and cysteine 120 each contribute to the serotonin site. A DRY motif; important for ligand-induced conformation changes motif is present at residues 133–135; the sequence is DRY. At 133–152 the chain is on the cytoplasmic side; it reads DRYWAITDPIDYVNKRTPRR. A helical transmembrane segment spans residues 153 to 174; it reads AAALISLTWLIGFLISIPPMLG. Topologically, residues 175–193 are extracellular; the sequence is WRTPEDRSDPDACTISKDH. A helical membrane pass occupies residues 194–216; the sequence is GYTIYSTFGAFYIPLLLMLVLYG. The Cytoplasmic portion of the chain corresponds to 217-346; it reads RIFRAARFRI…LARERKTVKT (130 aa). The interval 235-262 is disordered; the sequence is KTGADTRHGASPAPQPKKSVNGESGSRN. Residues threonine 314, lysine 345, threonine 346, and glycine 352 each contribute to the 1D-myo-inositol 4-phosphate site. Residues 347–370 traverse the membrane as a helical segment; the sequence is LGIIMGTFILCWLPFFIVALVLPF. Over 371–378 the chain is Extracellular; it reads CESSCHMP. Residues 379–403 traverse the membrane as a helical segment; that stretch reads TLLGAIINWLGYSNSLLNPVIYAYF. Residues 396–400 carry the NPxxY motif; important for ligand-induced conformation changes and signaling motif; that stretch reads NPVIY. The 1D-myo-inositol 4-phosphate site is built by phenylalanine 403, asparagine 404, and lysine 405. Over 404 to 422 the chain is Cytoplasmic; sequence NKDFQNAFKKIIKCKFCRQ.

Belongs to the G-protein coupled receptor 1 family. 5-hydroxytryptamine receptor subfamily. HTR1A sub-subfamily. Heterodimer; heterodimerizes with GPER1. Interacts with YIF1B. Interacts with GPR39 and GALR1. In terms of tissue distribution, detected in lymph nodes, thymus and spleen. Detected in activated T-cells, but not in resting T-cells.

It is found in the cell membrane. It localises to the cell projection. The protein localises to the dendrite. G-protein coupled receptor activity is regulated by lipids: phosphatidylinositol 4-phosphate increases HTR1A-mediated activity. Binding to aripiprazol drug is regulated by cholesterol, which shapes the ligand-binding pocket, determining the specificity for aripiprazol. Activated by IHCH-7179 small molecule: IHCH-7179 acts both as an agonist activator for HTR1A and as an antagonist inhibitor for HTR2A. Activated by SEP-363856 small molecule: IHCH-7179 acts both as an agonist activator for HTR1A and TAAR1. In terms of biological role, G-protein coupled receptor for 5-hydroxytryptamine (serotonin). Also functions as a receptor for various drugs and psychoactive substances. Ligand binding causes a conformation change that triggers signaling via guanine nucleotide-binding proteins (G proteins) and modulates the activity of downstream effectors, such as adenylate cyclase. HTR1A is coupled to G(i)/G(o) G alpha proteins and mediates inhibitory neurotransmission: signaling inhibits adenylate cyclase activity and activates a phosphatidylinositol-calcium second messenger system that regulates the release of Ca(2+) ions from intracellular stores. Beta-arrestin family members regulate signaling by mediating both receptor desensitization and resensitization processes. Plays a role in the regulation of 5-hydroxytryptamine release and in the regulation of dopamine and 5-hydroxytryptamine metabolism. Plays a role in the regulation of dopamine and 5-hydroxytryptamine levels in the brain, and thereby affects neural activity, mood and behavior. Plays a role in the response to anxiogenic stimuli. This chain is 5-hydroxytryptamine receptor 1A, found in Homo sapiens (Human).